A 526-amino-acid chain; its full sequence is Collagen alpha-2(I) chain (526 aa).

Residues 1-291 are disordered; it reads GFPGEKGPSG…PRSPPSLRPK (291 aa). Composition is skewed to low complexity over residues 9-36, 44-81, and 110-131; these read SGEA…LGLP, LPGV…NGAP, and YPGN…SVGP. Positions 165 to 176 are enriched in basic and acidic residues; that stretch reads RGDKGEPGDKGP. The span at 249–261 shows a compositional bias: pro residues; it reads AGPPGPPGPPGPP. A propeptide spans 263–526 (C-terminal propeptide); sequence ASGGGYDFGY…YVDVGPVCFK (264 aa). The region spanning 293 to 526 is the Fibrillar collagen NC1 domain; the sequence is YEVDATLKSL…YVDVGPVCFK (234 aa). Cystine bridges form between Cys-323-Cys-355, Cys-363-Cys-524, and Cys-432-Cys-477. 5 residues coordinate Ca(2+): Asp-341, Asn-343, Gln-344, Cys-346, and Asp-349.

The protein belongs to the fibrillar collagen family. Trimers of one alpha 2(I) and two alpha 1(I) chains. Interacts (via C-terminus) with TMEM131 (via PapD-L domain); the interaction is direct and is involved in assembly and TRAPPIII ER-to-Golgi transport complex-dependent secretion of collagen. Prolines at the third position of the tripeptide repeating unit (G-X-Y) are hydroxylated in some or all of the chains. In terms of tissue distribution, forms the fibrils of tendon, ligaments and bones. In bones the fibrils are mineralized with calcium hydroxyapatite.

The protein resides in the secreted. It localises to the extracellular space. The protein localises to the extracellular matrix. Type I collagen is a member of group I collagen (fibrillar forming collagen). The sequence is that of Collagen alpha-2(I) chain (COL1A2) from Oryctolagus cuniculus (Rabbit).